Consider the following 122-residue polypeptide: Small ribosomal subunit protein uS12c (122 aa).

This sequence belongs to the universal ribosomal protein uS12 family. As to quaternary structure, part of the 30S ribosomal subunit.

It is found in the plastid. The protein resides in the chloroplast. Functionally, with S4 and S5 plays an important role in translational accuracy. Located at the interface of the 30S and 50S subunits. The protein is Small ribosomal subunit protein uS12c (rps12) of Cyanidioschyzon merolae (strain NIES-3377 / 10D) (Unicellular red alga).